Reading from the N-terminus, the 204-residue chain is EVTKPETINYRTLKPEMDGLFCEKIFGPSKDWECHCGKYKRVRHRGIVCERCGVEVTESRVRRHRMGFIKLAAPVSHVWYLKGIPSYVAILLDMPLRDVEQIVYFNCYVVLDPGDHKELKYKQLLTEDEWLEIEDEIYAEESEIENEPVVGIGAEALKQLLEDLNLEEVAEQLREEINGSKGQKRAKLIKRLRVIDNFVATSAR.

4 residues coordinate Zn(2+): cysteine 34, cysteine 36, cysteine 49, and cysteine 52.

It belongs to the RNA polymerase beta' chain family. RpoC1 subfamily. In cyanobacteria the RNAP catalytic core is composed of 2 alpha, 1 beta, 1 beta', 1 gamma and 1 omega subunit. When a sigma factor is associated with the core the holoenzyme is formed, which can initiate transcription. Requires Zn(2+) as cofactor.

The enzyme catalyses RNA(n) + a ribonucleoside 5'-triphosphate = RNA(n+1) + diphosphate. DNA-dependent RNA polymerase catalyzes the transcription of DNA into RNA using the four ribonucleoside triphosphates as substrates. This is DNA-directed RNA polymerase subunit gamma (rpoC1) from Synechococcus sp. (strain WH8103).